A 333-amino-acid polypeptide reads, in one-letter code: DNA-directed RNA polymerase subunit alpha (333 aa).

The tract at residues 1–246 (MEKFIKINWT…AHLNIIGDVN (246 aa)) is alpha N-terminal domain (alpha-NTD). The segment at 263 to 333 (HSKTQNILIQ…YNVFLDKGEE (71 aa)) is alpha C-terminal domain (alpha-CTD).

This sequence belongs to the RNA polymerase alpha chain family. Homodimer. The RNAP catalytic core consists of 2 alpha, 1 beta, 1 beta' and 1 omega subunit. When a sigma factor is associated with the core the holoenzyme is formed, which can initiate transcription.

It catalyses the reaction RNA(n) + a ribonucleoside 5'-triphosphate = RNA(n+1) + diphosphate. In terms of biological role, DNA-dependent RNA polymerase catalyzes the transcription of DNA into RNA using the four ribonucleoside triphosphates as substrates. The protein is DNA-directed RNA polymerase subunit alpha of Mycoplasma mobile (strain ATCC 43663 / 163K / NCTC 11711) (Mesomycoplasma mobile).